The chain runs to 300 residues: Formylmethanofuran--tetrahydromethanopterin formyltransferase-like protein (300 aa).

It belongs to the FTR family.

The chain is Formylmethanofuran--tetrahydromethanopterin formyltransferase-like protein from Methanopyrus kandleri (strain AV19 / DSM 6324 / JCM 9639 / NBRC 100938).